Reading from the N-terminus, the 301-residue chain is Ornithine carbamoyltransferase (301 aa).

Carbamoyl phosphate contacts are provided by residues 47–50 (STRT), Gln-74, Arg-98, and 125–128 (HPMQ). L-ornithine contacts are provided by residues Asn-156, Asp-220, and 224–225 (SM). Carbamoyl phosphate-binding positions include 260–261 (CL) and Arg-288.

This sequence belongs to the aspartate/ornithine carbamoyltransferase superfamily. OTCase family.

It localises to the cytoplasm. It carries out the reaction carbamoyl phosphate + L-ornithine = L-citrulline + phosphate + H(+). It participates in amino-acid biosynthesis; L-arginine biosynthesis; L-arginine from L-ornithine and carbamoyl phosphate: step 1/3. Reversibly catalyzes the transfer of the carbamoyl group from carbamoyl phosphate (CP) to the N(epsilon) atom of ornithine (ORN) to produce L-citrulline. This is Ornithine carbamoyltransferase from Picrophilus torridus (strain ATCC 700027 / DSM 9790 / JCM 10055 / NBRC 100828 / KAW 2/3).